The primary structure comprises 538 residues: MESNDSGGVAAKHGFLFQDCVAAYHVTRMLRDKTIRSVRCEVTDDIDIVSDGYIDFVQVKSTGKTRWNISDIVQNSKGADKKTIPCSSILHKSMQCESDLSLGRRYSIVTEEKVNKTLEYLTISPNARLDKPGRQELIDDLNKRTDNFLTDSGISVSDWIDAATWEVFSSLRELELLGIKNIRLASQDLHGVILSSETVAEDIWCRILDTVTRKGEHSRRIHSADDKSYLRPDLLEWFKQRVEDDQSRSGRKIYVKRDLPHILTPFRAPMASVCAKRKGQVLHQQYSLKKYRYKHIADNVCQWLDEVFLRPKEMSDIHKLTFIEKRERLKNSVFKSLHDVSEFLGRVLLHATIRQHHESQPIPCMLYVEKAGAEKILENVHIVRRDPEGDQLWIGFSELVTDINIAVRLPEIRDQLYEDISDCIDTARKKILDIKDDNYLLRHDIDEILDGSQPFDAHLDRFTFVLFVGYDSNLLTEPETPGFEDDLEKETAVLFEKFAADLIEDSPFANLCIHVFIYPAPSLERLTQLVDEKVREVV.

As to quaternary structure, interacts with AbpB.

Its function is as follows. Part of an antiviral system composed of AbpA and AbpB; when both are expressed from a plasmid they confer resistance to phages T2, T4, T7 and lambda but not RB32 or RB69. Resistance is temperature dependent, it can be seen at 30 degrees Celsius but not at 37 or 42 degrees Celsius. The system impairs phage but not bacterial DNA synthesis (shown for T4, T7 and lambda). Partially suppressed by mutations in T4 gene 41, a replicative helicase. The polypeptide is Anti-bacteriophage protein A (Escherichia coli (strain K12)).